The following is a 569-amino-acid chain: Urease subunit alpha (569 aa).

One can recognise a Urease domain in the interval 132–569; sequence GGIDSHIHFI…LPLAQRYFLF (438 aa). Residues histidine 137, histidine 139, and lysine 220 each contribute to the Ni(2+) site. Lysine 220 carries the post-translational modification N6-carboxylysine. Histidine 222 serves as a coordination point for substrate. Positions 249 and 275 each coordinate Ni(2+). Histidine 323 functions as the Proton donor in the catalytic mechanism. Aspartate 363 serves as a coordination point for Ni(2+).

This sequence belongs to the metallo-dependent hydrolases superfamily. Urease alpha subunit family. Heterotrimer of UreA (gamma), UreB (beta) and UreC (alpha) subunits. Three heterotrimers associate to form the active enzyme. Requires Ni cation as cofactor. In terms of processing, carboxylation allows a single lysine to coordinate two nickel ions.

It localises to the cytoplasm. The enzyme catalyses urea + 2 H2O + H(+) = hydrogencarbonate + 2 NH4(+). The protein operates within nitrogen metabolism; urea degradation; CO(2) and NH(3) from urea (urease route): step 1/1. The protein is Urease subunit alpha of Dechloromonas aromatica (strain RCB).